We begin with the raw amino-acid sequence, 780 residues long: ATP-dependent 6-phosphofructokinase, muscle type (780 aa).

Thr2 is modified (N-acetylthreonine). The segment at Thr2–His390 is N-terminal catalytic PFK domain 1. ATP-binding positions include Gly25, Arg88 to Cys89, and Gly118 to Ser121. Asp119 contributes to the Mg(2+) binding site. Ser133 is subject to Phosphoserine. Substrate-binding positions include Ser164 to Asp166, Arg201, Met208 to Arg210, Glu264, Arg292, and His298 to Arg301. Residue Asp166 is the Proton acceptor of the active site. Residue Ser377 is modified to Phosphoserine. An interdomain linker region spans residues Val391–His401. Residues Thr402 to Val780 are C-terminal regulatory PFK domain 2. Beta-D-fructose 2,6-bisphosphate-binding positions include Arg471 and Thr528–Asn532. The O-linked (GlcNAc) serine glycan is linked to Ser530. Position 557 is an N6-(2-hydroxyisobutyryl)lysine (Lys557). Beta-D-fructose 2,6-bisphosphate-binding positions include Arg566, Met573–Gly575, Glu629, Arg655, and His661–Gln664. Ser667 bears the Phosphoserine mark. A beta-D-fructose 2,6-bisphosphate-binding site is contributed by Arg735. Position 775 is a phosphoserine (Ser775).

This sequence belongs to the phosphofructokinase type A (PFKA) family. ATP-dependent PFK group I subfamily. Eukaryotic two domain clade 'E' sub-subfamily. Homo- and heterotetramers. Phosphofructokinase (PFK) enzyme functions as a tetramer composed of different combinations of 3 types of subunits, called PFKM (where M stands for Muscle), PFKL (Liver) and PFKP (Platelet). The composition of the PFK tetramer differs according to the tissue type it is present in. In muscles, it is composed of 4 PFKM subunits (also called M4). In the liver, the predominant form is a tetramer of PFKL subunits (L4). In erythrocytes, both PFKM and PFKL subunits randomly tetramerize to form M4, L4 and other combinations (ML3, M2L2, M3L). The kinetic and regulatory properties of the tetrameric enzyme are dependent on the subunit composition, hence can vary across tissues. Interacts (via C-terminus) with HK1 (via N-terminal spermatogenic cell-specific region). Requires Mg(2+) as cofactor. GlcNAcylation decreases enzyme activity.

Its subcellular location is the cytoplasm. The catalysed reaction is beta-D-fructose 6-phosphate + ATP = beta-D-fructose 1,6-bisphosphate + ADP + H(+). Its pathway is carbohydrate degradation; glycolysis; D-glyceraldehyde 3-phosphate and glycerone phosphate from D-glucose: step 3/4. With respect to regulation, allosterically activated by ADP, AMP, or fructose 2,6-bisphosphate, and allosterically inhibited by ATP or citrate. In terms of biological role, catalyzes the phosphorylation of D-fructose 6-phosphate to fructose 1,6-bisphosphate by ATP, the first committing step of glycolysis. This is ATP-dependent 6-phosphofructokinase, muscle type (PFKM) from Homo sapiens (Human).